The chain runs to 446 residues: Glutamate--tRNA ligase 2 (446 aa).

The 'HIGH' region motif lies at 8–18; sequence PSPTGYLHIGN. The 'KMSKS' region signature appears at 239 to 243; it reads GLSKR. Lysine 242 contributes to the ATP binding site.

Belongs to the class-I aminoacyl-tRNA synthetase family. Glutamate--tRNA ligase type 1 subfamily. Monomer.

The protein resides in the cytoplasm. It catalyses the reaction tRNA(Glu) + L-glutamate + ATP = L-glutamyl-tRNA(Glu) + AMP + diphosphate. In terms of biological role, catalyzes the attachment of glutamate to tRNA(Glu) in a two-step reaction: glutamate is first activated by ATP to form Glu-AMP and then transferred to the acceptor end of tRNA(Glu). This chain is Glutamate--tRNA ligase 2, found in Methylobacterium radiotolerans (strain ATCC 27329 / DSM 1819 / JCM 2831 / NBRC 15690 / NCIMB 10815 / 0-1).